The primary structure comprises 199 residues: Dephospho-CoA kinase (199 aa).

The DPCK domain occupies Val4 to Ser199. Residue Ala12–Thr17 coordinates ATP.

This sequence belongs to the CoaE family.

The protein resides in the cytoplasm. It carries out the reaction 3'-dephospho-CoA + ATP = ADP + CoA + H(+). The protein operates within cofactor biosynthesis; coenzyme A biosynthesis; CoA from (R)-pantothenate: step 5/5. Functionally, catalyzes the phosphorylation of the 3'-hydroxyl group of dephosphocoenzyme A to form coenzyme A. This chain is Dephospho-CoA kinase, found in Oceanobacillus iheyensis (strain DSM 14371 / CIP 107618 / JCM 11309 / KCTC 3954 / HTE831).